The chain runs to 44 residues: YADAIFTNSYRKVLGQLSARKLLQDIMSRQQGERNQEQGARVRL.

Leucine 44 bears the Leucine amide mark.

The protein belongs to the glucagon family.

It is found in the secreted. Functionally, GRF is released by the hypothalamus and acts on the adenohypophyse to stimulate the secretion of growth hormone. The sequence is that of Somatoliberin (GHRH) from Sus scrofa (Pig).